The following is a 142-amino-acid chain: uncharacterized protein (142 aa).

Helical transmembrane passes span 3 to 23, 30 to 50, and 91 to 111; these read LIFI…FNLL, SVSW…AVWI, and FFLL…AYFS.

Its subcellular location is the membrane. This is an uncharacterized protein from Saccharomyces cerevisiae (strain ATCC 204508 / S288c) (Baker's yeast).